Consider the following 414-residue polypeptide: Serine hydroxymethyltransferase (414 aa).

(6S)-5,6,7,8-tetrahydrofolate-binding positions include Leu-118 and 122–124 (GHL). Lys-227 bears the N6-(pyridoxal phosphate)lysine mark. (6S)-5,6,7,8-tetrahydrofolate is bound by residues Glu-240 and 350–352 (SPF).

This sequence belongs to the SHMT family. Homodimer. Pyridoxal 5'-phosphate is required as a cofactor.

The protein localises to the cytoplasm. The enzyme catalyses (6R)-5,10-methylene-5,6,7,8-tetrahydrofolate + glycine + H2O = (6S)-5,6,7,8-tetrahydrofolate + L-serine. It functions in the pathway one-carbon metabolism; tetrahydrofolate interconversion. It participates in amino-acid biosynthesis; glycine biosynthesis; glycine from L-serine: step 1/1. Catalyzes the reversible interconversion of serine and glycine with tetrahydrofolate (THF) serving as the one-carbon carrier. This reaction serves as the major source of one-carbon groups required for the biosynthesis of purines, thymidylate, methionine, and other important biomolecules. Also exhibits THF-independent aldolase activity toward beta-hydroxyamino acids, producing glycine and aldehydes, via a retro-aldol mechanism. The chain is Serine hydroxymethyltransferase from Bacillus thuringiensis (strain Al Hakam).